The following is a 252-amino-acid chain: Imidazole glycerol phosphate synthase subunit HisF (252 aa).

Residues Asp13 and Asp132 contribute to the active site.

It belongs to the HisA/HisF family. In terms of assembly, heterodimer of HisH and HisF.

It localises to the cytoplasm. The enzyme catalyses 5-[(5-phospho-1-deoxy-D-ribulos-1-ylimino)methylamino]-1-(5-phospho-beta-D-ribosyl)imidazole-4-carboxamide + L-glutamine = D-erythro-1-(imidazol-4-yl)glycerol 3-phosphate + 5-amino-1-(5-phospho-beta-D-ribosyl)imidazole-4-carboxamide + L-glutamate + H(+). The protein operates within amino-acid biosynthesis; L-histidine biosynthesis; L-histidine from 5-phospho-alpha-D-ribose 1-diphosphate: step 5/9. Functionally, IGPS catalyzes the conversion of PRFAR and glutamine to IGP, AICAR and glutamate. The HisF subunit catalyzes the cyclization activity that produces IGP and AICAR from PRFAR using the ammonia provided by the HisH subunit. This chain is Imidazole glycerol phosphate synthase subunit HisF, found in Campylobacter fetus subsp. fetus (strain 82-40).